The chain runs to 602 residues: ATP-dependent lipid A-core flippase (602 aa).

5 consecutive transmembrane segments (helical) span residues 28-48, 84-104, 158-178, 180-200, and 268-288; these read VGIFLLSIVGFVIFASTQPML, LLIILIAAWQGLGSFLGNYFL, IKVVIREGLTVVFLFAYLLWM, WHLTLVMVAILPVIAVMVSIA, and PMLQLVIYSAMAALMFLVLFL. Positions 32–323 constitute an ABC transmembrane type-1 domain; it reads LLSIVGFVIF…LSEVSSTIQK (292 aa). In terms of domain architecture, ABC transporter spans 355–591; sequence LEVRNLSFTY…NGHYARLHAM (237 aa). 389-396 provides a ligand contact to ATP; that stretch reads GRSGSGKS.

Belongs to the ABC transporter superfamily. Lipid exporter (TC 3.A.1.106) family. As to quaternary structure, homodimer.

It is found in the cell inner membrane. The catalysed reaction is ATP + H2O + lipid A-core oligosaccharideSide 1 = ADP + phosphate + lipid A-core oligosaccharideSide 2.. Its function is as follows. Involved in lipopolysaccharide (LPS) biosynthesis. Translocates lipid A-core from the inner to the outer leaflet of the inner membrane. Transmembrane domains (TMD) form a pore in the inner membrane and the ATP-binding domain (NBD) is responsible for energy generation. The chain is ATP-dependent lipid A-core flippase from Pseudomonas putida (strain ATCC 47054 / DSM 6125 / CFBP 8728 / NCIMB 11950 / KT2440).